The following is a 352-amino-acid chain: N-terminal EF-hand calcium-binding protein 1 (352 aa).

Position 4 is a phosphoserine (S4). 2 EF-hand domains span residues 26-61 (KGMS…GVLS) and 60-95 (LSGE…HLGE). Residues D39, N41, D43, K45, and E50 each contribute to the Ca(2+) site. The stretch at 135 to 163 (LLKETLNQLQSLQNSLECAMETTEEQTRQ) forms a coiled coil. The interval 180–202 (GKRSSRRVQRHNSFSPNSPQFNV) is disordered. Residues 190–202 (HNSFSPNSPQFNV) are compositionally biased toward polar residues. Residues S192 and S197 each carry the phosphoserine modification. Positions 209–275 (EEDNQWMTQI…EEFQLALKHY (67 aa)) form a coiled coil. Positions 252 to 340 (MLVQRQMSVI…LETPELTSTM (89 aa)) constitute an ABM domain.

In terms of assembly, interacts with STX1. May interact with CPNE6.

Its subcellular location is the cytoplasm. In Pongo abelii (Sumatran orangutan), this protein is N-terminal EF-hand calcium-binding protein 1 (NECAB1).